The primary structure comprises 507 residues: Mandelamide hydrolase (507 aa).

Catalysis depends on charge relay system residues K100 and S180. S204 acts as the Acyl-ester intermediate in catalysis.

In terms of assembly, monomer.

The enzyme catalyses (R)-mandelamide + H2O = (R)-mandelate + NH4(+). With respect to regulation, inhibited by 3,4-dichloroisocoumarin and PMSF. Its function is as follows. Hydrolyzes both the R- and the S-enantiomers of mandelamide, and phenylacetamide. Has lower activity on 3-phenylpropionaide and lactamide. Does not hydrolyze benzamide. Hydrolyzes esters and amides with little steric bulk. Preferentially hydrolyzes aromatic substrates. This is Mandelamide hydrolase from Pseudomonas putida (Arthrobacter siderocapsulatus).